A 394-amino-acid polypeptide reads, in one-letter code: Actin-related protein 2 (394 aa).

Position 1 is an N-acetylmethionine (Met1). Residues 160–162 (GDG) and 214–218 (RMIKE) each bind ATP. Residue Lys299 is modified to N6-acetyllysine. Residue 305–310 (GGSTMY) coordinates ATP. Lys322 carries the post-translational modification N6-acetyllysine.

It belongs to the actin family. ARP2 subfamily. Component of the Arp2/3 complex composed of ACTR2/ARP2, ACTR3/ARP3, ARPC1B/p41-ARC, ARPC2/p34-ARC, ARPC3/p21-ARC, ARPC4/p20-ARC and ARPC5/p16-ARC. Interacts with AVIL.

The protein localises to the cytoplasm. It is found in the cytoskeleton. Its subcellular location is the cell projection. The protein resides in the nucleus. Functionally, ATP-binding component of the Arp2/3 complex, a multiprotein complex that mediates actin polymerization upon stimulation by nucleation-promoting factor (NPF). The Arp2/3 complex mediates the formation of branched actin networks in the cytoplasm, providing the force for cell motility. Seems to contact the pointed end of the daughter actin filament. In podocytes, required for the formation of lamellipodia downstream of AVIL and PLCE1 regulation. In addition to its role in the cytoplasmic cytoskeleton, the Arp2/3 complex also promotes actin polymerization in the nucleus, thereby regulating gene transcription and repair of damaged DNA. The Arp2/3 complex promotes homologous recombination (HR) repair in response to DNA damage by promoting nuclear actin polymerization, leading to drive motility of double-strand breaks (DSBs). This chain is Actin-related protein 2 (ACTR2), found in Pongo abelii (Sumatran orangutan).